The following is a 578-amino-acid chain: 65-kDa microtubule-associated protein 2 (578 aa).

5 coiled-coil regions span residues 64–84 (AELL…TTAL), 151–184 (DETD…VLEF), 235–257 (TLKE…LTDL), 290–312 (ALAL…LKSS), and 461–489 (AMLD…QQEQ). Basic and acidic residues predominate over residues 473–494 (REDEKRRLKEQKKQQEQPHTDQ). A disordered region spans residues 473 to 578 (REDEKRRLKE…SRADPVMASP (106 aa)). Phosphoserine occurs at positions 503 and 532. Positions 549–558 (KIASPSNIVA) are enriched in polar residues. A phosphoserine mark is found at serine 566, serine 569, and serine 577.

Belongs to the MAP65/ASE1 family. As to quaternary structure, forms a dimer. Binds to microtubules (MT). Bundles polymerized MT via the formation of 25-nm crossbridges with centrally located endocytic MT.

Its subcellular location is the nucleus. The protein resides in the cytoplasm. It localises to the cytoskeleton. It is found in the spindle pole. The protein localises to the phragmoplast. Functionally, microtubule-associated protein that stabilize microtubules (MT). Involved in the regulation of MT organization and dynamics. Confers MT resistance to the drug propyzamide and cold conditions. The protein is 65-kDa microtubule-associated protein 2 (MAP65-2) of Arabidopsis thaliana (Mouse-ear cress).